Reading from the N-terminus, the 229-residue chain is Cytidylate kinase (229 aa).

10 to 18 lines the ATP pocket; that stretch reads GFSSCGKST.

It belongs to the cytidylate kinase family. Type 1 subfamily.

It localises to the cytoplasm. The catalysed reaction is CMP + ATP = CDP + ADP. It carries out the reaction dCMP + ATP = dCDP + ADP. The polypeptide is Cytidylate kinase (Bacteroides fragilis (strain ATCC 25285 / DSM 2151 / CCUG 4856 / JCM 11019 / LMG 10263 / NCTC 9343 / Onslow / VPI 2553 / EN-2)).